A 750-amino-acid polypeptide reads, in one-letter code: Photosystem I P700 chlorophyll a apoprotein A1 (750 aa).

8 helical membrane-spanning segments follow: residues 70–93, 156–179, 195–219, 291–309, 346–369, 385–411, 433–455, and 531–549; these read VFSA…FHGA, LYCT…FHYH, LNHH…HVSL, TAHH…GHMY, WHAQ…HHMY, LSLF…IFMV, AIIS…LYIH, and FLVH…LILL. Residues cysteine 573 and cysteine 582 each coordinate [4Fe-4S] cluster. 2 helical membrane-spanning segments follow: residues 589 to 610 and 664 to 686; these read HVFL…HFSW and LSAY…MFLF. Histidine 675 is a binding site for chlorophyll a'. The chlorophyll a site is built by methionine 683 and tyrosine 691. Phylloquinone is bound at residue tryptophan 692. Residues 724–744 traverse the membrane as a helical segment; sequence AVGVAHYLLGGIATTWAFFLA.

Belongs to the PsaA/PsaB family. The PsaA/B heterodimer binds the P700 chlorophyll special pair and subsequent electron acceptors. PSI consists of a core antenna complex that captures photons, and an electron transfer chain that converts photonic excitation into a charge separation. The eukaryotic PSI reaction center is composed of at least 11 subunits. P700 is a chlorophyll a/chlorophyll a' dimer, A0 is one or more chlorophyll a, A1 is one or both phylloquinones and FX is a shared 4Fe-4S iron-sulfur center. is required as a cofactor.

It is found in the plastid. The protein resides in the chloroplast thylakoid membrane. The enzyme catalyses reduced [plastocyanin] + hnu + oxidized [2Fe-2S]-[ferredoxin] = oxidized [plastocyanin] + reduced [2Fe-2S]-[ferredoxin]. In terms of biological role, psaA and PsaB bind P700, the primary electron donor of photosystem I (PSI), as well as the electron acceptors A0, A1 and FX. PSI is a plastocyanin-ferredoxin oxidoreductase, converting photonic excitation into a charge separation, which transfers an electron from the donor P700 chlorophyll pair to the spectroscopically characterized acceptors A0, A1, FX, FA and FB in turn. Oxidized P700 is reduced on the lumenal side of the thylakoid membrane by plastocyanin. The chain is Photosystem I P700 chlorophyll a apoprotein A1 from Angiopteris evecta (Mule's foot fern).